The primary structure comprises 186 residues: Ribosome-recycling factor (186 aa).

The tract at residues 140–163 (LKKAEKDGDIGQDEGRSLSERVQK) is disordered.

It belongs to the RRF family.

It localises to the cytoplasm. Responsible for the release of ribosomes from messenger RNA at the termination of protein biosynthesis. May increase the efficiency of translation by recycling ribosomes from one round of translation to another. This Rhizobium rhizogenes (strain K84 / ATCC BAA-868) (Agrobacterium radiobacter) protein is Ribosome-recycling factor.